Consider the following 190-residue polypeptide: HTH-type transcriptional repressor AcnR (190 aa).

The HTH tetR-type domain maps to 10–70 (SMRRQEILEG…ALAREDAARM (61 aa)). The segment at residues 33 to 52 (TVRRLEETVGKSRGAIFHHF) is a DNA-binding region (H-T-H motif). Citrate-binding positions include 79-80 (LV), arginine 130, and asparagine 134. Glutamate 181 is a Mg(2+) binding site. Residue arginine 185 participates in citrate binding.

In terms of assembly, homodimer.

In terms of biological role, acnR negatively controls the expression of the aconitase gene acn. In Corynebacterium diphtheriae (strain ATCC 700971 / NCTC 13129 / Biotype gravis), this protein is HTH-type transcriptional repressor AcnR.